Here is a 199-residue protein sequence, read N- to C-terminus: Fe/S biogenesis protein NfuA (199 aa).

[4Fe-4S] cluster is bound by residues Cys151 and Cys154.

Belongs to the NfuA family. As to quaternary structure, homodimer. Requires [4Fe-4S] cluster as cofactor.

In terms of biological role, involved in iron-sulfur cluster biogenesis. Binds a 4Fe-4S cluster, can transfer this cluster to apoproteins, and thereby intervenes in the maturation of Fe/S proteins. Could also act as a scaffold/chaperone for damaged Fe/S proteins. The polypeptide is Fe/S biogenesis protein NfuA (Stenotrophomonas maltophilia (strain K279a)).